The primary structure comprises 283 residues: ATP phosphoribosyltransferase (283 aa).

Belongs to the ATP phosphoribosyltransferase family. Long subfamily. It depends on Mg(2+) as a cofactor.

The protein localises to the cytoplasm. It carries out the reaction 1-(5-phospho-beta-D-ribosyl)-ATP + diphosphate = 5-phospho-alpha-D-ribose 1-diphosphate + ATP. Its pathway is amino-acid biosynthesis; L-histidine biosynthesis; L-histidine from 5-phospho-alpha-D-ribose 1-diphosphate: step 1/9. Feedback inhibited by histidine. Its function is as follows. Catalyzes the condensation of ATP and 5-phosphoribose 1-diphosphate to form N'-(5'-phosphoribosyl)-ATP (PR-ATP). Has a crucial role in the pathway because the rate of histidine biosynthesis seems to be controlled primarily by regulation of HisG enzymatic activity. This Bifidobacterium longum (strain NCC 2705) protein is ATP phosphoribosyltransferase.